Consider the following 520-residue polypeptide: Putative thymidine phosphorylase 1 (520 aa).

The protein belongs to the thymidine/pyrimidine-nucleoside phosphorylase family. Type 2 subfamily.

The enzyme catalyses thymidine + phosphate = 2-deoxy-alpha-D-ribose 1-phosphate + thymine. This chain is Putative thymidine phosphorylase 1, found in Cupriavidus necator (strain ATCC 17699 / DSM 428 / KCTC 22496 / NCIMB 10442 / H16 / Stanier 337) (Ralstonia eutropha).